The following is a 418-amino-acid chain: Light-independent protochlorophyllide reductase subunit N (418 aa).

3 residues coordinate [4Fe-4S] cluster: Cys-17, Cys-42, and Cys-103.

It belongs to the BchN/ChlN family. As to quaternary structure, protochlorophyllide reductase is composed of three subunits; ChlL, ChlN and ChlB. Forms a heterotetramer of two ChlB and two ChlN subunits. The cofactor is [4Fe-4S] cluster.

It catalyses the reaction chlorophyllide a + oxidized 2[4Fe-4S]-[ferredoxin] + 2 ADP + 2 phosphate = protochlorophyllide a + reduced 2[4Fe-4S]-[ferredoxin] + 2 ATP + 2 H2O. It participates in porphyrin-containing compound metabolism; chlorophyll biosynthesis (light-independent). Its function is as follows. Component of the dark-operative protochlorophyllide reductase (DPOR) that uses Mg-ATP and reduced ferredoxin to reduce ring D of protochlorophyllide (Pchlide) to form chlorophyllide a (Chlide). This reaction is light-independent. The NB-protein (ChlN-ChlB) is the catalytic component of the complex. This chain is Light-independent protochlorophyllide reductase subunit N, found in Prochlorococcus marinus (strain MIT 9215).